The chain runs to 358 residues: 2-oxoisovalerate dehydrogenase subunit beta 2, mitochondrial (358 aa).

A mitochondrion-targeting transit peptide spans 1–16 (MAAALVRRFCRGSSFP). Tyr119 lines the thiamine diphosphate pocket. K(+) contacts are provided by Gly145, Leu147, Thr148, Asp198, and Asn200.

In terms of assembly, heterotetramer of alpha and beta chains. Thiamine diphosphate is required as a cofactor. In terms of tissue distribution, expressed in the non-photosynthetic organs such as siliques, flowers and roots.

It localises to the mitochondrion matrix. The catalysed reaction is N(6)-[(R)-lipoyl]-L-lysyl-[protein] + 3-methyl-2-oxobutanoate + H(+) = N(6)-[(R)-S(8)-2-methylpropanoyldihydrolipoyl]-L-lysyl-[protein] + CO2. In terms of biological role, the branched-chain alpha-keto dehydrogenase complex catalyzes the overall conversion of alpha-keto acids to acyl-CoA and CO(2). It contains multiple copies of three enzymatic components: branched-chain alpha-keto acid decarboxylase (E1), lipoamide acyltransferase (E2) and lipoamide dehydrogenase (E3). Required during sugar starvation and acts under the control of a sugar-sensing mechanism involving Ser/Thr kinases and phosphatases. The polypeptide is 2-oxoisovalerate dehydrogenase subunit beta 2, mitochondrial (DIN4) (Arabidopsis thaliana (Mouse-ear cress)).